A 515-amino-acid chain; its full sequence is Low affinity ammonium transporter (515 aa).

The Extracellular segment spans residues Met-1–Asn-78. A helical transmembrane segment spans residues Ala-79–Ile-99. Topologically, residues Ala-100 to Lys-111 are cytoplasmic. A helical membrane pass occupies residues Phe-112–Tyr-132. The Extracellular segment spans residues Ser-133–Cys-140. A helical membrane pass occupies residues Cys-141–Gly-161. At Arg-162–Asn-171 the chain is on the cytoplasmic side. The chain crosses the membrane as a helical span at residues Met-172 to Ser-192. At Ser-193–Pro-202 the chain is on the extracellular side. The helical transmembrane segment at Trp-203–Ile-223 threads the bilayer. Topologically, residues Pro-224 to Arg-241 are cytoplasmic. Residues Ile-242 to Asn-262 traverse the membrane as a helical segment. Residues Gln-263 to Gln-270 are Extracellular-facing. Residues Thr-271–Ile-291 traverse the membrane as a helical segment. Over Glu-292 to Ala-310 the chain is Cytoplasmic. A helical membrane pass occupies residues Phe-311–Trp-331. Residues Gln-332–Ser-346 lie on the Extracellular side of the membrane. The helical transmembrane segment at Ala-347–Leu-367 threads the bilayer. Residues Ser-368–Thr-374 are Cytoplasmic-facing. The helical transmembrane segment at Val-375–Val-395 threads the bilayer. Over His-396–Thr-403 the chain is Extracellular. A helical transmembrane segment spans residues Phe-404–Met-424. Residues Leu-425–Gly-435 lie on the Cytoplasmic side of the membrane. A helical transmembrane segment spans residues Leu-436–Ala-456. Topologically, residues Gly-457–Tyr-479 are extracellular. A helical transmembrane segment spans residues Met-480–Phe-500. Topologically, residues Met-501–Glu-515 are cytoplasmic.

Belongs to the major facilitator superfamily.

The protein resides in the cell membrane. Functionally, low affinity ammonium transporter of the plasma membrane. May be involved in drug resistance through pumping them out of the cell. The polypeptide is Low affinity ammonium transporter (Saccharomyces cerevisiae (strain ATCC 204508 / S288c) (Baker's yeast)).